The following is a 433-amino-acid chain: 23S rRNA (uracil(1939)-C(5))-methyltransferase RlmD (433 aa).

In terms of domain architecture, TRAM spans 10–68; that stretch reads RTTTRQIITVSVNDLDSFGQGVARHNGKTLFIPGLLPQENAEVAVTEDKKQYARAKVVR. [4Fe-4S] cluster is bound by residues Cys81, Cys87, Cys90, and Cys162. S-adenosyl-L-methionine is bound by residues Gln265, Phe294, Asn299, Glu315, Asn342, and Asp363. Catalysis depends on Cys389, which acts as the Nucleophile.

This sequence belongs to the class I-like SAM-binding methyltransferase superfamily. RNA M5U methyltransferase family. RlmD subfamily.

It catalyses the reaction uridine(1939) in 23S rRNA + S-adenosyl-L-methionine = 5-methyluridine(1939) in 23S rRNA + S-adenosyl-L-homocysteine + H(+). Functionally, catalyzes the formation of 5-methyl-uridine at position 1939 (m5U1939) in 23S rRNA. The protein is 23S rRNA (uracil(1939)-C(5))-methyltransferase RlmD of Shigella flexneri serotype 5b (strain 8401).